Consider the following 569-residue polypeptide: 3-(3-hydroxy-phenyl)propionate/3-hydroxycinnamic acid hydroxylase (569 aa).

FAD-binding positions include 12-41 and 277-287; these read DVVV…VVDE and FRKGRLMLAGD.

This sequence belongs to the PheA/TfdB FAD monooxygenase family. It depends on FAD as a cofactor.

The enzyme catalyses 3-(3-hydroxyphenyl)propanoate + NADH + O2 + H(+) = 3-(2,3-dihydroxyphenyl)propanoate + NAD(+) + H2O. It catalyses the reaction (2E)-3-(3-hydroxyphenyl)prop-2-enoate + NADH + O2 + H(+) = (2E)-3-(2,3-dihydroxyphenyl)prop-2-enoate + NAD(+) + H2O. The protein operates within aromatic compound metabolism; 3-phenylpropanoate degradation. Catalyzes the insertion of one atom of molecular oxygen into position 2 of the phenyl ring of 3-(3-hydroxyphenyl)propionate (3-HPP) and hydroxycinnamic acid (3HCI). The chain is 3-(3-hydroxy-phenyl)propionate/3-hydroxycinnamic acid hydroxylase from Mycolicibacterium vanbaalenii (strain DSM 7251 / JCM 13017 / BCRC 16820 / KCTC 9966 / NRRL B-24157 / PYR-1) (Mycobacterium vanbaalenii).